Reading from the N-terminus, the 202-residue chain is UPF0316 protein SH1041 (202 aa).

The next 3 membrane-spanning stretches (helical) occupy residues 8–28 (PWSMVLAIFVINVFYVTFLTM), 40–60 (MAAAVSFLEVLVYVVGLGMVM), and 66–86 (IQNIFAYAFGFSIGILVGMKI).

It belongs to the UPF0316 family.

The protein localises to the cell membrane. The sequence is that of UPF0316 protein SH1041 from Staphylococcus haemolyticus (strain JCSC1435).